Reading from the N-terminus, the 336-residue chain is Peroxidase 20 (336 aa).

The first 24 residues, 1–24 (MEIKQKKVWLSLIVLYAITTSVLG), serve as a signal peptide directing secretion. Cystine bridges form between C39–C119, C72–C77, C125–C331, and C204–C239. H70 functions as the Proton acceptor in the catalytic mechanism. Residues D71, V74, G76, D78, and S80 each contribute to the Ca(2+) site. Residue P167 coordinates substrate. N170 is a glycosylation site (N-linked (GlcNAc...) asparagine). H197 is a binding site for heme b. A Ca(2+)-binding site is contributed by T198. The Ca(2+) site is built by D252, T255, and D260.

The protein belongs to the peroxidase family. Classical plant (class III) peroxidase subfamily. The cofactor is heme b. Ca(2+) serves as cofactor.

The protein resides in the secreted. It catalyses the reaction 2 a phenolic donor + H2O2 = 2 a phenolic radical donor + 2 H2O. Functionally, removal of H(2)O(2), oxidation of toxic reductants, biosynthesis and degradation of lignin, suberization, auxin catabolism, response to environmental stresses such as wounding, pathogen attack and oxidative stress. These functions might be dependent on each isozyme/isoform in each plant tissue. May be implicated in the systemic acquired resistance response via the salicylic acid signal transduction pathway. This chain is Peroxidase 20 (PER20), found in Arabidopsis thaliana (Mouse-ear cress).